The sequence spans 121 residues: Protein 3.8 (121 aa).

The polypeptide is Protein 3.8 (Escherichia phage T7 (Bacteriophage T7)).